A 436-amino-acid polypeptide reads, in one-letter code: Serine hydroxymethyltransferase (436 aa).

(6S)-5,6,7,8-tetrahydrofolate is bound by residues leucine 120 and 124 to 126 (GHL). N6-(pyridoxal phosphate)lysine is present on lysine 229.

It belongs to the SHMT family. Homodimer. Pyridoxal 5'-phosphate is required as a cofactor.

Its subcellular location is the cytoplasm. It carries out the reaction (6R)-5,10-methylene-5,6,7,8-tetrahydrofolate + glycine + H2O = (6S)-5,6,7,8-tetrahydrofolate + L-serine. The protein operates within one-carbon metabolism; tetrahydrofolate interconversion. Its pathway is amino-acid biosynthesis; glycine biosynthesis; glycine from L-serine: step 1/1. In terms of biological role, catalyzes the reversible interconversion of serine and glycine with tetrahydrofolate (THF) serving as the one-carbon carrier. This reaction serves as the major source of one-carbon groups required for the biosynthesis of purines, thymidylate, methionine, and other important biomolecules. Also exhibits THF-independent aldolase activity toward beta-hydroxyamino acids, producing glycine and aldehydes, via a retro-aldol mechanism. In Roseiflexus castenholzii (strain DSM 13941 / HLO8), this protein is Serine hydroxymethyltransferase.